The primary structure comprises 340 residues: HTH-type transcriptional regulator VirS (340 aa).

Positions 236-334 constitute an HTH araC/xylS-type domain; sequence ERVVGLARRL…GMTPRQYRAY (99 aa). 2 DNA-binding regions (H-T-H motif) span residues 254 to 275 and 301 to 324; these read EAIA…AAEG and LSQI…RRWF.

Phosphorylated by PknK. Phosphorylation increases affinity for the mymA promoter.

Its function is as follows. Regulates the expression of the mymA operon. The protein is HTH-type transcriptional regulator VirS (virS) of Mycobacterium tuberculosis (strain CDC 1551 / Oshkosh).